The following is a 349-amino-acid chain: Protein-glutamate methylesterase/protein-glutamine glutaminase 1 (349 aa).

The 118-residue stretch at 2 to 119 (RTLIVDDSAF…DVNKAEKELV (118 aa)) folds into the Response regulatory domain. The residue at position 53 (Asp53) is a 4-aspartylphosphate. The region spanning 158 to 345 (ILIGSSTGGP…EEIVKRLEAK (188 aa)) is the CheB-type methylesterase domain. Catalysis depends on residues Ser163, His190, and Asp287.

It belongs to the CheB family. Post-translationally, phosphorylated by CheA. Phosphorylation of the N-terminal regulatory domain activates the methylesterase activity.

The protein localises to the cytoplasm. It catalyses the reaction [protein]-L-glutamate 5-O-methyl ester + H2O = L-glutamyl-[protein] + methanol + H(+). The catalysed reaction is L-glutaminyl-[protein] + H2O = L-glutamyl-[protein] + NH4(+). Functionally, involved in chemotaxis. Part of a chemotaxis signal transduction system that modulates chemotaxis in response to various stimuli. Catalyzes the demethylation of specific methylglutamate residues introduced into the chemoreceptors (methyl-accepting chemotaxis proteins or MCP) by CheR. Also mediates the irreversible deamidation of specific glutamine residues to glutamic acid. This Methanosarcina acetivorans (strain ATCC 35395 / DSM 2834 / JCM 12185 / C2A) protein is Protein-glutamate methylesterase/protein-glutamine glutaminase 1.